We begin with the raw amino-acid sequence, 210 residues long: Neuroendocrine protein 7B2 (210 aa).

The signal sequence occupies residues 1-24 (MTSRMAILSGLLFWLLLEWNPAFA). A disulfide bridge links Cys-118 with Cys-128. Ser-139 and Ser-203 each carry phosphoserine.

It belongs to the 7B2 family. As to quaternary structure, interacts with PCSK2/PC2 early in the secretory pathway. Dissociation occurs at later stages. Proteolytically cleaved in the Golgi by a furin-like convertase to generate bioactive peptides. In terms of processing, sulfated on tyrosine residues.

The protein resides in the secreted. Acts as a molecular chaperone for PCSK2/PC2, preventing its premature activation in the regulated secretory pathway. Binds to inactive PCSK2 in the endoplasmic reticulum and facilitates its transport from there to later compartments of the secretory pathway where it is proteolytically matured and activated. Also required for cleavage of PCSK2 but does not appear to be involved in its folding. Plays a role in regulating pituitary hormone secretion. The C-terminal peptide inhibits PCSK2 in vitro. The sequence is that of Neuroendocrine protein 7B2 (Scg5) from Rattus norvegicus (Rat).